Consider the following 529-residue polypeptide: MTTPSIAIAPSFADEHRRLVAELNNKLAAAALGGNERARKRHVSRGKLLPRERVDRLLDPGSPFLELAPLAAGGMYGDESPGAGIITGIGRVSGRQCVIVANDATVKGGTYYPMTVKKHLRAQEVALQNMLPCIYLVDSGGAFLPRQDEVFPDREHFGRIFYNQATMSAKGIPQVAAVLGSCTAGGAYVPAMSDEAVIVREQGTIFLGGPPLVKAATGEIVSAEELGGGDLHSRTSGVTDHLADDDEDALRIVRAIADTFGPCEPAQWDVRRSVEPKYPQAELYDVVPPDPRVPYDVHEVVVRIVDGSEFSEFKAKYGKTLVTAFARVHGHPVGIVANNGVLFSESALKGAHFIELCDKRKIPLLFLQNIAGFMVGRDYEAGGIAKHGAKMVTAVACARVPKLTVVIGGSYGAGNYSMCGRAYSPRFLWMWPNARISVMGGEQAASVLATVRGEQLSAAGTPWSPDEEEAFKAPIRAQYEDQGNPYYSTARLWDDGIIDPADTRTVVGLALSLCAHAPLDQVGYGVFRM.

The CoA carboxyltransferase N-terminal domain occupies 16 to 272 (HRRLVAELNN…CEPAQWDVRR (257 aa)). One can recognise a CoA carboxyltransferase C-terminal domain in the interval 275–521 (EPKYPQAELY…SLCAHAPLDQ (247 aa)).

Belongs to the AccD/PCCB family. In terms of assembly, the biotin-dependent acyl-CoA carboxylase complex is composed of AccA1, which contains the biotin carboxylase (BC) and biotin carboxyl carrier protein (BCCP) domains, and AccD1, which contains the carboxyl transferase (CT) domain. The AccA1/AccD1 complex forms a dodecamer.

It carries out the reaction 3-methylbut-2-enoyl-CoA + N(6)-carboxybiotinyl-L-lysyl-[protein] = 3-methyl-(2E)-glutaconyl-CoA + N(6)-biotinyl-L-lysyl-[protein]. It functions in the pathway amino-acid degradation; L-leucine degradation. Component of a biotin-dependent acyl-CoA carboxylase complex. This subunit transfers the CO2 from carboxybiotin to the CoA ester substrate. When associated with the alpha1 subunit AccA1, is involved in branched amino-acid catabolism with methylcrotonyl coenzyme A as the substrate. Shows residual with propionyl-CoA and acetyl-CoA. The protein is Biotin-dependent 3-methylcrotonyl-coenzyme A carboxylase beta1 subunit of Mycobacterium tuberculosis (strain ATCC 25618 / H37Rv).